The following is a 509-amino-acid chain: Sorting nexin MVP1 (509 aa).

The segment covering 1–25 (MDTYSGQNGWADTSNASPWGDTNDT) has biased composition (polar residues). The segment at 1 to 28 (MDTYSGQNGWADTSNASPWGDTNDTMPI) is disordered. A PX domain is found at 126 to 245 (QLDIISIEEI…TFLTVPTDLT (120 aa)). 4 residues coordinate a 1,2-diacyl-sn-glycero-3-phospho-(1D-myo-inositol-3-phosphate): R170, S172, K196, and R211.

The protein belongs to the sorting nexin family.

The protein localises to the cytoplasm. It is found in the membrane. Required for vacuolar protein sorting. This Candida glabrata (strain ATCC 2001 / BCRC 20586 / JCM 3761 / NBRC 0622 / NRRL Y-65 / CBS 138) (Yeast) protein is Sorting nexin MVP1 (MVP1).